The primary structure comprises 335 residues: Pyridoxal 5'-phosphate synthase subunit PdxS (335 aa).

Residue aspartate 30 participates in D-ribose 5-phosphate binding. The Schiff-base intermediate with D-ribose 5-phosphate role is filled by lysine 87. Glycine 159 lines the D-ribose 5-phosphate pocket. Residue arginine 171 coordinates D-glyceraldehyde 3-phosphate. Residues glycine 257 and 278-279 (GS) each bind D-ribose 5-phosphate.

It belongs to the PdxS/SNZ family. As to quaternary structure, in the presence of PdxT, forms a dodecamer of heterodimers.

The enzyme catalyses aldehydo-D-ribose 5-phosphate + D-glyceraldehyde 3-phosphate + L-glutamine = pyridoxal 5'-phosphate + L-glutamate + phosphate + 3 H2O + H(+). It participates in cofactor biosynthesis; pyridoxal 5'-phosphate biosynthesis. In terms of biological role, catalyzes the formation of pyridoxal 5'-phosphate from ribose 5-phosphate (RBP), glyceraldehyde 3-phosphate (G3P) and ammonia. The ammonia is provided by the PdxT subunit. Can also use ribulose 5-phosphate and dihydroxyacetone phosphate as substrates, resulting from enzyme-catalyzed isomerization of RBP and G3P, respectively. In Thermococcus kodakarensis (strain ATCC BAA-918 / JCM 12380 / KOD1) (Pyrococcus kodakaraensis (strain KOD1)), this protein is Pyridoxal 5'-phosphate synthase subunit PdxS.